Reading from the N-terminus, the 481-residue chain is Cobyric acid synthase (481 aa).

The GATase cobBQ-type domain occupies 248-435 (ALTVAWLAFS…LHGMFGADGF (188 aa)). The Nucleophile role is filled by C330. H427 is an active-site residue.

It belongs to the CobB/CobQ family. CobQ subfamily.

The protein operates within cofactor biosynthesis; adenosylcobalamin biosynthesis. Catalyzes amidations at positions B, D, E, and G on adenosylcobyrinic A,C-diamide. NH(2) groups are provided by glutamine, and one molecule of ATP is hydrogenolyzed for each amidation. The polypeptide is Cobyric acid synthase (Cereibacter sphaeroides (strain ATCC 17023 / DSM 158 / JCM 6121 / CCUG 31486 / LMG 2827 / NBRC 12203 / NCIMB 8253 / ATH 2.4.1.) (Rhodobacter sphaeroides)).